The chain runs to 64 residues: DNA gyrase inhibitor YacG (64 aa).

4 residues coordinate Zn(2+): cysteine 10, cysteine 13, cysteine 29, and cysteine 33.

Belongs to the DNA gyrase inhibitor YacG family. Interacts with GyrB. The cofactor is Zn(2+).

Its function is as follows. Inhibits all the catalytic activities of DNA gyrase by preventing its interaction with DNA. Acts by binding directly to the C-terminal domain of GyrB, which probably disrupts DNA binding by the gyrase. The polypeptide is DNA gyrase inhibitor YacG (Pectobacterium carotovorum subsp. carotovorum (strain PC1)).